We begin with the raw amino-acid sequence, 139 residues long: D-ribose pyranase (139 aa).

The Proton donor role is filled by histidine 20. Residues aspartate 28, histidine 106, and 128 to 130 (YAN) contribute to the substrate site.

This sequence belongs to the RbsD / FucU family. RbsD subfamily. Homodecamer.

The protein resides in the cytoplasm. It catalyses the reaction beta-D-ribopyranose = beta-D-ribofuranose. It functions in the pathway carbohydrate metabolism; D-ribose degradation; D-ribose 5-phosphate from beta-D-ribopyranose: step 1/2. Catalyzes the interconversion of beta-pyran and beta-furan forms of D-ribose. This Aliivibrio fischeri (strain ATCC 700601 / ES114) (Vibrio fischeri) protein is D-ribose pyranase.